The primary structure comprises 500 residues: MAAASVSAASDSQFSSVLAEPSRSNGNMVRHSSSPYVLYPPDKPFLNSDLRRSPNKPTFAYPESNSRAIFSALKNLQDKIRRLELERIQAEESVKTLSRETIEYKKVLDEQIQERENSKNEESKHNQELASQLVAAENKCNLLEKQLEYMRNMIKHAEMERTSVLEKQVSLERERQHDQTHVQSQLEKLDLLEQEYNKLTAMQALAEKKMQELESKLREEEQERKRMQARAAELQSGLEANRLIFEDKTTSCVSTSTRKIKKKKSKPPEKKGSRTYFGAQPHYRLCLGDMPFVAGTSTSPSHAVVANVQHVLHLMKHHSKALCNDRVVNSVPLAKQACSRVSKSKKSVVPPSSSVNEELSDVLQTLQDEFGQMSFDHQQLTKLIQESPTVELKDNLECELEALVGRMEAKANQITKVRKYQAQLEKQNIDKQKKELKANKKTLDEEGNSSGRSSGVPRTASKKDLAKQRPGEKSRKNLQLLKDMQTIQNSLQSSNLCWDY.

A compositionally biased stretch (low complexity) spans 1–16 (MAAASVSAASDSQFSS). Residues 1–59 (MAAASVSAASDSQFSSVLAEPSRSNGNMVRHSSSPYVLYPPDKPFLNSDLRRSPNKPTF) form a disordered region. Residues 22 to 35 (SRSNGNMVRHSSSP) are compositionally biased toward polar residues. Ser53 carries the post-translational modification Phosphoserine. The segment at 58–239 (TFAYPESNSR…RAAELQSGLE (182 aa)) is centrosome localization domain (CLD). The stretch at 63–242 (ESNSRAIFSA…ELQSGLEANR (180 aa)) forms a coiled coil. Disordered stretches follow at residues 256-275 (STRK…GSRT) and 432-478 (QKKE…RKNL). The tract at residues 278-491 (GAQPHYRLCL…KDMQTIQNSL (214 aa)) is mediates interaction with microtubules. The stretch at 389-449 (TVELKDNLEC…KKTLDEEGNS (61 aa)) forms a coiled coil. Composition is skewed to basic and acidic residues over residues 432–444 (QKKE…KTLD) and 461–475 (SKKD…EKSR).

It belongs to the translokin family. Interacts with FGF2 and RAP80. Does not interact with FGF1 or FGF2 isoform 24 kDa. Homodimer and homooligomer. Interacts with microtubules. In terms of tissue distribution, ubiquitous (at protein level). Expressed in testis, predominantly in round spermatids. Low expression is detected in other tissues.

The protein resides in the nucleus. Its subcellular location is the cytoplasm. The protein localises to the cytoskeleton. It is found in the microtubule organizing center. It localises to the centrosome. Centrosomal protein which may be required for microtubule attachment to centrosomes. May act by forming ring-like structures around microtubules. Mediates nuclear translocation and mitogenic activity of the internalized growth factor FGF2. The protein is Centrosomal protein of 57 kDa (Cep57) of Mus musculus (Mouse).